Consider the following 316-residue polypeptide: Methionyl-tRNA formyltransferase (316 aa).

113–116 is a binding site for (6S)-5,6,7,8-tetrahydrofolate; it reads SLLP.

The protein belongs to the Fmt family.

It catalyses the reaction L-methionyl-tRNA(fMet) + (6R)-10-formyltetrahydrofolate = N-formyl-L-methionyl-tRNA(fMet) + (6S)-5,6,7,8-tetrahydrofolate + H(+). In terms of biological role, attaches a formyl group to the free amino group of methionyl-tRNA(fMet). The formyl group appears to play a dual role in the initiator identity of N-formylmethionyl-tRNA by promoting its recognition by IF2 and preventing the misappropriation of this tRNA by the elongation apparatus. This is Methionyl-tRNA formyltransferase from Proteus mirabilis (strain HI4320).